A 476-amino-acid polypeptide reads, in one-letter code: Ribulose bisphosphate carboxylase large chain (476 aa).

Residues 1 to 2 (MS) constitute a propeptide that is removed on maturation. The residue at position 3 (Pro3) is an N-acetylproline. An N6,N6,N6-trimethyllysine modification is found at Lys14. Substrate-binding residues include Asn123 and Thr173. Lys175 (proton acceptor) is an active-site residue. Lys177 is a binding site for substrate. Mg(2+)-binding residues include Lys201, Asp203, and Glu204. An N6-carboxylysine modification is found at Lys201. The Proton acceptor role is filled by His294. Substrate-binding residues include Arg295, His327, and Ser379.

It belongs to the RuBisCO large chain family. Type I subfamily. As to quaternary structure, heterohexadecamer of 8 large chains and 8 small chains; disulfide-linked. The disulfide link is formed within the large subunit homodimers. Mg(2+) serves as cofactor. The disulfide bond which can form in the large chain dimeric partners within the hexadecamer appears to be associated with oxidative stress and protein turnover.

Its subcellular location is the plastid. The protein localises to the chloroplast. It carries out the reaction 2 (2R)-3-phosphoglycerate + 2 H(+) = D-ribulose 1,5-bisphosphate + CO2 + H2O. The catalysed reaction is D-ribulose 1,5-bisphosphate + O2 = 2-phosphoglycolate + (2R)-3-phosphoglycerate + 2 H(+). In terms of biological role, ruBisCO catalyzes two reactions: the carboxylation of D-ribulose 1,5-bisphosphate, the primary event in carbon dioxide fixation, as well as the oxidative fragmentation of the pentose substrate in the photorespiration process. Both reactions occur simultaneously and in competition at the same active site. This Sorghum bicolor (Sorghum) protein is Ribulose bisphosphate carboxylase large chain.